We begin with the raw amino-acid sequence, 215 residues long: Ras-related protein Rab-14 (215 aa).

A2 is subject to N-acetylalanine. G21, V22, G23, K24, S25, C26, A38, D39, C40, H42, and T43 together coordinate GTP. S25 contributes to the Mg(2+) binding site. A Switch 1 motif is present at residues 42-47 (HTIGVE). Residues T43 and D66 each coordinate Mg(2+). A Switch 2 motif is present at residues 68–77 (AGQERFRAVT). GTP is bound by residues G69, N124, K125, D127, A155, and K156. Positions 188-215 (SGVQHKPSAPQGGRLTSEPQPQREGCGC) are disordered. 2 S-geranylgeranyl cysteine lipidation sites follow: C213 and C215. Position 215 is a cysteine methyl ester (C215).

This sequence belongs to the small GTPase superfamily. Rab family. Mg(2+) serves as cofactor.

The protein localises to the recycling endosome. It is found in the early endosome membrane. Its subcellular location is the golgi apparatus membrane. It localises to the golgi apparatus. The protein resides in the trans-Golgi network membrane. The protein localises to the cytoplasmic vesicle. It is found in the phagosome. The catalysed reaction is GTP + H2O = GDP + phosphate + H(+). Regulated by guanine nucleotide exchange factors (GEFs) including DENND6A and DENND6B which promote the exchange of bound GDP for free GTP. Regulated by GTPase activating proteins (GAPs) which increase the GTP hydrolysis activity. Inhibited by GDP dissociation inhibitors (GDIs) which prevent Rab-GDP dissociation. In terms of biological role, the small GTPases Rab are key regulators of intracellular membrane trafficking, from the formation of transport vesicles to their fusion with membranes. Rabs cycle between an inactive GDP-bound form and an active GTP-bound form that is able to recruit to membranes different set of downstream effectors directly responsible for vesicle formation, movement, tethering and fusion. Involved in membrane trafficking between the Golgi complex and endosomes during early embryonic development. Regulates the Golgi to endosome transport of FGFR-containing vesicles during early development, a key process for developing basement membrane and epiblast and primitive endoderm lineages during early postimplantation development. May act by modulating the kinesin KIF16B-cargo association to endosomes. Regulates, together with its guanine nucleotide exchange factor DENND6A, the specific endocytic transport of ADAM10, N-cadherin/CDH2 shedding and cell-cell adhesion. Mediates endosomal tethering and fusion through the interaction with RUFY1 and RAB4B. Interaction with RAB11FIP1 may function in the process of neurite formation. This is Ras-related protein Rab-14 (RAB14) from Gallus gallus (Chicken).